Consider the following 133-residue polypeptide: MTSAVPATSLILWLAVALGGALGALARYSVSIAWMPAQLKFPVATLTVNVLGSFLMGVFYVVIVEKAMLAPVWRHVIMIGFLGAFTTFSTFSIESLHLWQSGHWQIAISYVVANVVLSISAVVVAIVLTEKLV.

The next 4 helical transmembrane spans lie at 5–25 (VPAT…LGAL), 43–63 (VATL…YVVI), 76–96 (VIMI…IESL), and 108–128 (ISYV…AIVL). Na(+) is bound by residues Gly83 and Thr86.

Belongs to the fluoride channel Fluc/FEX (TC 1.A.43) family.

Its subcellular location is the cell inner membrane. The enzyme catalyses fluoride(in) = fluoride(out). Na(+) is not transported, but it plays an essential structural role and its presence is essential for fluoride channel function. Fluoride-specific ion channel. Important for reducing fluoride concentration in the cell, thus reducing its toxicity. This is Fluoride-specific ion channel FluC from Saccharophagus degradans (strain 2-40 / ATCC 43961 / DSM 17024).